Consider the following 648-residue polypeptide: Biosynthetic arginine decarboxylase (648 aa).

Lysine 109 carries the post-translational modification N6-(pyridoxal phosphate)lysine. Position 291–301 (291–301 (IDVGGGLGIDF)) interacts with substrate.

The protein belongs to the Orn/Lys/Arg decarboxylase class-II family. SpeA subfamily. Requires Mg(2+) as cofactor. It depends on pyridoxal 5'-phosphate as a cofactor.

It catalyses the reaction L-arginine + H(+) = agmatine + CO2. It functions in the pathway amine and polyamine biosynthesis; agmatine biosynthesis; agmatine from L-arginine: step 1/1. Its function is as follows. Catalyzes the biosynthesis of agmatine from arginine. The polypeptide is Biosynthetic arginine decarboxylase (Prochlorococcus marinus (strain MIT 9312)).